A 357-amino-acid polypeptide reads, in one-letter code: Peptide chain release factor 1 (357 aa).

Gln-234 is subject to N5-methylglutamine. Residues 284 to 304 (RIEGERSEDRKSKIGTGDRSE) form a disordered region.

This sequence belongs to the prokaryotic/mitochondrial release factor family. Methylated by PrmC. Methylation increases the termination efficiency of RF1.

Its subcellular location is the cytoplasm. Peptide chain release factor 1 directs the termination of translation in response to the peptide chain termination codons UAG and UAA. The sequence is that of Peptide chain release factor 1 from Pelagibacter ubique (strain HTCC1062).